We begin with the raw amino-acid sequence, 612 residues long: Elongation factor 4 (612 aa).

The 183-residue stretch at 11–193 (KHIRNFAIVA…KVVKDIPAPS (183 aa)) folds into the tr-type G domain. GTP contacts are provided by residues 23–28 (DHGKST) and 140–143 (NKID).

The protein belongs to the TRAFAC class translation factor GTPase superfamily. Classic translation factor GTPase family. LepA subfamily.

It localises to the cell membrane. The enzyme catalyses GTP + H2O = GDP + phosphate + H(+). In terms of biological role, required for accurate and efficient protein synthesis under certain stress conditions. May act as a fidelity factor of the translation reaction, by catalyzing a one-codon backward translocation of tRNAs on improperly translocated ribosomes. Back-translocation proceeds from a post-translocation (POST) complex to a pre-translocation (PRE) complex, thus giving elongation factor G a second chance to translocate the tRNAs correctly. Binds to ribosomes in a GTP-dependent manner. The protein is Elongation factor 4 of Lactobacillus helveticus (strain DPC 4571).